Consider the following 564-residue polypeptide: H/ACA ribonucleoprotein complex non-core subunit NAF1 (564 aa).

Disordered stretches follow at residues 1–29 (MESE…ELGK), 108–218 (LVVQ…DSEG), 238–264 (DEDD…KVRG), 387–489 (ASWE…HPSY), and 538–564 (PHMY…PPPS). The segment covering 146–157 (ASGLSLLAAYSS) has biased composition (low complexity). The span at 238-249 (DEDDEDFDEDGA) shows a compositional bias: acidic residues. The residue at position 250 (T250) is a Phosphothreonine. Position 254 is a phosphoserine (S254). The span at 388–402 (SWEHDVEPPARYVDH) shows a compositional bias: basic and acidic residues. S403 is subject to Phosphoserine. Over residues 426 to 446 (STDSVDTVTSVATTATKASSV) the composition is skewed to low complexity. Residue T427 is modified to Phosphothreonine. At S429 the chain carries Phosphoserine. T432 is subject to Phosphothreonine. The segment covering 468–489 (PSINQHNQNQPQDEQYNFHPSY) has biased composition (polar residues). The segment covering 538–553 (PHMYPPPPPFAPPPPN) has biased composition (pro residues). Over residues 554 to 564 (NQSHQGQPPPS) the composition is skewed to polar residues.

This sequence belongs to the NAF1 family. During assembly of the complex, component of the box H/ACA small nucleolar ribonucleoprotein (H/ACA snoRNP) complex.

It is found in the nucleus. Functionally, RNA-binding protein required for the maturation of the box H/ACA small nucleolar ribonucleoprotein (H/ACA snoRNP) complex and ribosome biogenesis. During assembly of the H/ACA snoRNP complex it associates with the complex and dissociates during complex maturation, becoming replaced by Gar1 to yield mature H/ACA snoRNP complex. In Drosophila melanogaster (Fruit fly), this protein is H/ACA ribonucleoprotein complex non-core subunit NAF1.